Consider the following 133-residue polypeptide: Large ribosomal subunit protein uL14m (133 aa).

The protein belongs to the universal ribosomal protein uL14 family. As to quaternary structure, probably part of the large ribosomal subunit.

It is found in the hydrogenosome. The polypeptide is Large ribosomal subunit protein uL14m (rpl14) (Nyctotherus ovalis).